A 185-amino-acid chain; its full sequence is Ribosome-recycling factor (185 aa).

The protein belongs to the RRF family.

The protein resides in the cytoplasm. In terms of biological role, responsible for the release of ribosomes from messenger RNA at the termination of protein biosynthesis. May increase the efficiency of translation by recycling ribosomes from one round of translation to another. The polypeptide is Ribosome-recycling factor (Pelobacter propionicus (strain DSM 2379 / NBRC 103807 / OttBd1)).